Here is a 131-residue protein sequence, read N- to C-terminus: Histone H2A.2 (131 aa).

The segment at 1 to 22 is disordered; sequence MSGGKGKAGSSEKASTSRSAKA. Position 2 is an N-acetylserine (Ser2). N6-acetyllysine is present on residues Lys5 and Lys7. N5-methylglutamine is present on Gln105. A Glycyl lysine isopeptide (Lys-Gly) (interchain with G-Cter in SUMO) cross-link involves residue Lys126. The residue at position 128 (Ser128) is a Phosphoserine. Residues 128 to 129 carry the [ST]-Q motif motif; that stretch reads SQ.

It belongs to the histone H2A family. As to quaternary structure, the nucleosome is a histone octamer containing two molecules each of H2A, H2B, H3 and H4 assembled in one H3-H4 heterotetramer and two H2A-H2B heterodimers. The octamer wraps approximately 147 bp of DNA. Post-translationally, phosphorylated to form H2AS128ph (gamma-H2A) in response to DNA double-strand breaks (DSBs) generated by exogenous genotoxic agents and by stalled replication forks. Phosphorylation is dependent on the DNA damage checkpoint kinases MEC1/ATR and TEL1/ATM, spreads on either side of a detected DSB site and may mark the surrounding chromatin for recruitment of proteins required for DNA damage signaling and repair. Gamma-H2A is removed from the DNA prior to the strand invasion-primer extension step of the repair process and subsequently dephosphorylated. Dephosphorylation is necessary for efficient recovery from the DNA damage checkpoint. Acetylated by ESA1 to form H2AK4ac and H2AK7ac.

The protein localises to the nucleus. It is found in the chromosome. In terms of biological role, core component of nucleosome which plays a central role in DNA double strand break (DSB) repair. Nucleosomes wrap and compact DNA into chromatin, limiting DNA accessibility to the cellular machineries which require DNA as a template. Histones thereby play a central role in transcription regulation, DNA repair, DNA replication and chromosomal stability. DNA accessibility is regulated via a complex set of post-translational modifications of histones, also called histone code, and nucleosome remodeling. This is Histone H2A.2 (HTA2) from Scheffersomyces stipitis (strain ATCC 58785 / CBS 6054 / NBRC 10063 / NRRL Y-11545) (Yeast).